The following is a 218-amino-acid chain: Large ribosomal subunit protein uL1 (218 aa).

Belongs to the universal ribosomal protein uL1 family. Part of the 50S ribosomal subunit.

Functionally, probably involved in E site tRNA release. Binds directly to 23S rRNA. Protein L1 is also a translational repressor protein, it controls the translation of its operon by binding to its mRNA. This Saccharolobus solfataricus (strain ATCC 35092 / DSM 1617 / JCM 11322 / P2) (Sulfolobus solfataricus) protein is Large ribosomal subunit protein uL1.